The chain runs to 511 residues: Arabinose import ATP-binding protein AraG (511 aa).

2 consecutive ABC transporter domains span residues 5 to 240 (LEFR…MVGR) and 240 to 501 (RQID…LRPR). 37–44 (GENGAGKS) lines the ATP pocket.

The protein belongs to the ABC transporter superfamily. Arabinose importer (TC 3.A.1.2.2) family. As to quaternary structure, the complex is composed of two ATP-binding proteins (AraG), two transmembrane proteins (AraH) and a solute-binding protein (AraF).

Its subcellular location is the cell inner membrane. It carries out the reaction L-arabinose(out) + ATP + H2O = L-arabinose(in) + ADP + phosphate + H(+). Functionally, part of the ABC transporter complex AraFGH involved in arabinose import. Responsible for energy coupling to the transport system. The polypeptide is Arabinose import ATP-binding protein AraG (Ralstonia nicotianae (strain ATCC BAA-1114 / GMI1000) (Ralstonia solanacearum)).